The following is a 362-amino-acid chain: Oxygen-dependent coproporphyrinogen-III oxidase (362 aa).

Positions 12-31 (RQENDQSTPQLELPPTDSRD) are disordered. Ser-118 serves as a coordination point for substrate. His-122 and His-132 together coordinate a divalent metal cation. Catalysis depends on His-132, which acts as the Proton donor. Substrate is bound at residue 134–136 (NYR). His-166 and His-196 together coordinate a divalent metal cation. The interval 286-321 (YVEFNLVWDRGTIFGLQTNGRTESILMSLPPLVRWE) is important for dimerization.

This sequence belongs to the aerobic coproporphyrinogen-III oxidase family. Homodimer. Requires a divalent metal cation as cofactor.

The protein resides in the cytoplasm. It catalyses the reaction coproporphyrinogen III + O2 + 2 H(+) = protoporphyrinogen IX + 2 CO2 + 2 H2O. Its pathway is porphyrin-containing compound metabolism; protoporphyrin-IX biosynthesis; protoporphyrinogen-IX from coproporphyrinogen-III (O2 route): step 1/1. Involved in the heme and chlorophyll biosynthesis. Catalyzes the aerobic oxidative decarboxylation of propionate groups of rings A and B of coproporphyrinogen-III to yield the vinyl groups in protoporphyrinogen-IX. This chain is Oxygen-dependent coproporphyrinogen-III oxidase, found in Synechococcus sp. (strain CC9902).